Reading from the N-terminus, the 183-residue chain is Glutathione-regulated potassium-efflux system ancillary protein KefG (183 aa).

Belongs to the NAD(P)H dehydrogenase (quinone) family. KefG subfamily. As to quaternary structure, interacts with KefB.

The protein localises to the cell inner membrane. It carries out the reaction a quinone + NADH + H(+) = a quinol + NAD(+). The catalysed reaction is a quinone + NADPH + H(+) = a quinol + NADP(+). Regulatory subunit of a potassium efflux system that confers protection against electrophiles. Required for full activity of KefB. The chain is Glutathione-regulated potassium-efflux system ancillary protein KefG from Shigella flexneri serotype 5b (strain 8401).